The chain runs to 363 residues: Succinyl-diaminopimelate desuccinylase (363 aa).

H63 provides a ligand contact to Zn(2+). The active site involves D65. D94 provides a ligand contact to Zn(2+). Residue E123 is the Proton acceptor of the active site. The Zn(2+) site is built by E124, E152, and H337.

The protein belongs to the peptidase M20A family. DapE subfamily. In terms of assembly, homodimer. The cofactor is Zn(2+). Requires Co(2+) as cofactor.

It carries out the reaction N-succinyl-(2S,6S)-2,6-diaminopimelate + H2O = (2S,6S)-2,6-diaminopimelate + succinate. It functions in the pathway amino-acid biosynthesis; L-lysine biosynthesis via DAP pathway; LL-2,6-diaminopimelate from (S)-tetrahydrodipicolinate (succinylase route): step 3/3. In terms of biological role, catalyzes the hydrolysis of N-succinyl-L,L-diaminopimelic acid (SDAP), forming succinate and LL-2,6-diaminopimelate (DAP), an intermediate involved in the bacterial biosynthesis of lysine and meso-diaminopimelic acid, an essential component of bacterial cell walls. In Campylobacter concisus (strain 13826), this protein is Succinyl-diaminopimelate desuccinylase.